Here is an 893-residue protein sequence, read N- to C-terminus: Zinc finger protein 281 (893 aa).

Disordered regions lie at residues 1–113 (MKIG…FPSQ), 126–148 (IKQE…HHHY), 153–172 (AGAE…SHGV), and 198–251 (SGSR…GAVL). K2 participates in a covalent cross-link: Glycyl lysine isopeptide (Lys-Gly) (interchain with G-Cter in SUMO2). Residues 7–36 (FLSGGGGPSSSGGSGSGGSSGSASGGSGGG) show a composition bias toward gly residues. Glycyl lysine isopeptide (Lys-Gly) (interchain with G-Cter in SUMO2) cross-links involve residues K100 and K127. Over residues 127-139 (KQEKPADPEEQPS) the composition is skewed to basic and acidic residues. Positions 161–170 (GLGGGEGGSH) are enriched in gly residues. A compositionally biased stretch (basic and acidic residues) spans 201–216 (RTDEHGNQEPKQDANV). Glycyl lysine isopeptide (Lys-Gly) (interchain with G-Cter in SUMO2) cross-links involve residues K211, K217, K223, K230, K240, and K256. C2H2-type zinc fingers lie at residues 258–280 (HICD…VLIH), 286–308 (FQCS…EKIH), and 314–336 (FGCD…KRTH). Glycyl lysine isopeptide (Lys-Gly) (interchain with G-Cter in SUMO2) cross-links involve residues K298 and K322. The C2H2-type 4; atypical zinc finger occupies 342 to 364 (YKCDTCQQYFSRTDRLLKHRRTC). K370 is covalently cross-linked (Glycyl lysine isopeptide (Lys-Gly) (interchain with G-Cter in SUMO2)). A disordered region spans residues 371-425 (GAASAEPGSSNHNSMGNLAVLSQGNTSSSRRKSKSKSIAIENKEHKTGKTNESQM). A compositionally biased stretch (polar residues) spans 377 to 396 (PGSSNHNSMGNLAVLSQGNT). S392 bears the Phosphoserine mark. Residues K406, K413, K457, and K474 each participate in a glycyl lysine isopeptide (Lys-Gly) (interchain with G-Cter in SUMO2) cross-link. At S481 the chain carries Phosphoserine. Residues K490, K495, K536, K596, K614, and K619 each participate in a glycyl lysine isopeptide (Lys-Gly) (interchain with G-Cter in SUMO2) cross-link. Residues 613–658 (GKSETQKEDPFNLTEPRVDLHTSGEHSELVQEENLSPGTQTPSNDK) form a disordered region. Over residues 616–641 (ETQKEDPFNLTEPRVDLHTSGEHSEL) the composition is skewed to basic and acidic residues. The span at 645 to 658 (ENLSPGTQTPSNDK) shows a compositional bias: polar residues. Residue S648 is modified to Phosphoserine. Glycyl lysine isopeptide (Lys-Gly) (interchain with G-Cter in SUMO2) cross-links involve residues K658 and K667. Residues 775 to 813 (SSAFQSSSQKLTSQKEQQKNLESSTSFQIPSQELASQID) are compositionally biased toward polar residues. The disordered stretch occupies residues 775-815 (SSAFQSSSQKLTSQKEQQKNLESSTSFQIPSQELASQIDPQ). The residue at position 782 (S782) is a Phosphoserine. Glycyl lysine isopeptide (Lys-Gly) (interchain with G-Cter in SUMO2) cross-links involve residues K784, K789, and K793. S805 carries the phosphoserine modification. Glycyl lysine isopeptide (Lys-Gly) (interchain with G-Cter in SUMO2) cross-links involve residues K816 and K838. T886 carries the post-translational modification Phosphothreonine.

The protein belongs to the krueppel C2H2-type zinc-finger protein family. Interacts with NANOG. Associates with the NuRD complex.

The protein resides in the nucleus. Transcription repressor that plays a role in regulation of embryonic stem cells (ESCs) differentiation. Required for ESCs differentiation and acts by mediating autorepression of NANOG in ESCs: binds to the NANOG promoter and promotes association of NANOG protein to its own promoter and recruits the NuRD complex, which deacetylates histones. Not required for establishement and maintenance of ESCs. Represses the transcription of a number of genes including GAST, ODC1 and VIM. Binds to the G-rich box in the enhancer region of these genes. The sequence is that of Zinc finger protein 281 (Znf281) from Mus musculus (Mouse).